The chain runs to 752 residues: Peptidyl-prolyl cis-trans isomerase G (752 aa).

The PPIase cyclophilin-type domain occupies 11–176 (FFDIAINNQP…AEVRILSCGE (166 aa)). The span at 182 to 193 (KVKKEEKKRHKS) shows a compositional bias: basic residues. A disordered region spans residues 182-752 (KVKKEEKKRH…SPGTDEDKSG (571 aa)). Residues 194-214 (SSSSSSSDSDSSSDSQSSSDS) show a composition bias toward low complexity. A compositionally biased stretch (basic residues) spans 226-251 (RKRKKKHRKNSRKHKKEKKKRKKSKK). Phosphoserine occurs at positions 252, 254, 255, 257, and 288. Residues 290-308 (PKADDKERKNREREREREC) are compositionally biased toward basic and acidic residues. Position 313 is a phosphoserine (S313). Basic residues predominate over residues 327-345 (FGRKIKGRGPRRYRTPSRS). Composition is skewed to basic and acidic residues over residues 346–366 (RSRD…EMQR) and 377–447 (RWIK…DKYN). Residue S354 is modified to Phosphoserine. Position 356 is a phosphothreonine (T356). S384 is modified (phosphoserine). K390 is covalently cross-linked (Glycyl lysine isopeptide (Lys-Gly) (interchain with G-Cter in SUMO2)). 3 positions are modified to phosphoserine: S395, S411, and S413. Basic residues predominate over residues 448 to 461 (KNKVKKRGKSKSRS). 2 stretches are compositionally biased toward basic and acidic residues: residues 462–552 (KSKE…DLTK) and 577–598 (RSHD…QEYR). Residues 599 to 625 (RRGRSRSRDRRTPGRSRSKDRRRRRRD) show a composition bias toward basic residues. The segment covering 626–682 (SRSSEREESQSRNKEKYRSQDSKSSHRKENSEGEKRMYSKSRDHSSSNNNREKKADI) has biased composition (basic and acidic residues). 2 positions are modified to phosphoserine: S685 and S688. The segment covering 685-705 (SPVSKTKQSSQDNEVKSSTLK) has biased composition (polar residues). K691 is covalently cross-linked (Glycyl lysine isopeptide (Lys-Gly) (interchain with G-Cter in SUMO2)). Phosphoserine is present on residues S694, S742, and S743. Positions 706–752 (NQEDEKTRSPVEKENQKSKGQENDHVHDKNKKCDHESSPGTDEDKSG) are enriched in basic and acidic residues. T746 is modified (phosphothreonine). Phosphoserine is present on S751.

In terms of assembly, interacts with CLK1, PNN and with the phosphorylated C-terminal domain of RNA polymerase II.

The protein localises to the nucleus matrix. The protein resides in the nucleus speckle. It carries out the reaction [protein]-peptidylproline (omega=180) = [protein]-peptidylproline (omega=0). Inhibited by cyclosporin A (CsA). Functionally, PPIase that catalyzes the cis-trans isomerization of proline imidic peptide bonds in oligopeptides and may therefore assist protein folding. May be implicated in the folding, transport, and assembly of proteins. May play an important role in the regulation of pre-mRNA splicing. In Rattus norvegicus (Rat), this protein is Peptidyl-prolyl cis-trans isomerase G (Ppig).